The following is a 511-amino-acid chain: MLNSVIKRSALCRFKFTCLQVSECRPAQIEISKRLYSAKASGNGEYDLCVIGGGPGGYVAAIRGAQLGLKTICVEKRGTLGGTCLNVGCIPSKALLNNSHIYHTVKHDTKRRGIDVSGVSVNLSQMMKAKDDSVKSLTSGIEYLFKKNKVEYAKGTGSFIDPQTLSVKGIDGAADQTIKAKNFIIATGSEVKPFPGVTIDEKKIVSSTGALSLSEVPKKMTVLGGGIIGLEMGSVWSRLGAEVTVVEFLPAVGGPMDADISKALSRIISKQGIKFKTSTKLLSAKVNGDSVEVEIENMKNNKRETYQTDVLLVAIGRVPYTEGLGLDKLGISMDKSNRVIMDSEYRTNIPHIRVIGDATLGPMLAHKAEDEGIAAVEYIAKGQGHVNYNCIPAVMYTHPEVAWVGITEQKAKESGIKYRIGTFPFSANSRAKTNMDADGLVKVIVDAETDRLLGVHMIGPMAGELIGEATLALEYGASAEDVARVCHAHPTLSEATKEAMMAAWCGKSIHF.

Residues 75-84 (EKRGTLGGTC), K93, G157, and 187-189 (TGS) contribute to the FAD site. C84 and C89 are joined by a disulfide. NAD(+)-binding positions include 224–231 (GGGIIGLE), E247, L281, and G316. FAD is bound by residues D357 and 363-366 (MLAH). The Proton acceptor role is filled by H489.

Belongs to the class-I pyridine nucleotide-disulfide oxidoreductase family. As to quaternary structure, homodimer. The cofactor is FAD.

It localises to the mitochondrion matrix. The catalysed reaction is N(6)-[(R)-dihydrolipoyl]-L-lysyl-[protein] + NAD(+) = N(6)-[(R)-lipoyl]-L-lysyl-[protein] + NADH + H(+). Its function is as follows. Lipoamide dehydrogenase is a component of the alpha-ketoacid dehydrogenase complexes. Malfunction of this protein blocks the progression of cell cycle from G1 to S phase. The chain is Dihydrolipoyl dehydrogenase, mitochondrial (dld1) from Schizosaccharomyces pombe (strain 972 / ATCC 24843) (Fission yeast).